Consider the following 211-residue polypeptide: MTTEAAPNLLVLTRHGESEWNKLNLFTGWKDPALSETGIKEAKLGGERLKSRGYKFDIAFTSALQRAQKTCQIILEEVGEPNLETIKSEKLNERYYGDLQGLNKDDARKKWGAEQVQIWRRSYDIAPPNGESLKDTAERVLPYYKSTIVPHILKGEKVLIAAHGNSLRALIMDLEGLTGDQIVKRELATGVPIVYHLDKDGKYVSKELIDN.

Residues 14 to 21 (RHGESEWN) and 27 to 28 (TG) contribute to the substrate site. The Tele-phosphohistidine intermediate role is filled by histidine 15. Position 37 is a phosphothreonine (threonine 37). Serine 62 carries the post-translational modification Phosphoserine. Substrate-binding positions include arginine 66, 93-96 (ERYY), lysine 104, 120-121 (RR), and 164-165 (GN). Residue glutamate 93 is the Proton donor/acceptor of the active site. Position 96 is a phosphotyrosine (tyrosine 96). Residue serine 166 is modified to Phosphoserine.

The protein belongs to the phosphoglycerate mutase family. BPG-dependent PGAM subfamily. In terms of assembly, monomer. The N-terminus is blocked.

The catalysed reaction is (2R)-2-phosphoglycerate = (2R)-3-phosphoglycerate. Its pathway is carbohydrate degradation; glycolysis; pyruvate from D-glyceraldehyde 3-phosphate: step 3/5. The chain is Phosphoglycerate mutase (gpm1) from Schizosaccharomyces pombe (strain 972 / ATCC 24843) (Fission yeast).